The sequence spans 128 residues: Calcitonin gene-related peptide 1 (128 aa).

A signal peptide spans 1–25; the sequence is MGFQKFSPFLALSILVLLQAGSLHA. The propeptide occupies 26 to 80; the sequence is APFRSALESSPADPATLSEDEARLLLAALVQDYVQMKASELEQEQEREGSRIIAQ. A disulfide bridge links cysteine 84 with cysteine 89. Phenylalanine 119 carries the phenylalanine amide modification. The propeptide occupies 125 to 128; the sequence is DLQA.

The protein belongs to the calcitonin family. Expressed in spinal cord.

It localises to the secreted. Functionally, CGRP1/CALCA is a peptide hormone that induces vasodilation mediated by the CALCRL-RAMP1 receptor complex. Dilates a variety of vessels including the coronary, cerebral and systemic vasculature. Its abundance in the CNS also points toward a neurotransmitter or neuromodulator role. It also elevates platelet cAMP. CGRP1 can also bind and activate CALCR-RAMP1 (AMYR1) receptor complex. The polypeptide is Calcitonin gene-related peptide 1 (Homo sapiens (Human)).